We begin with the raw amino-acid sequence, 61 residues long: Small ribosomal subunit protein uS14 (61 aa).

Positions 24, 27, 40, and 43 each coordinate Zn(2+).

Belongs to the universal ribosomal protein uS14 family. Zinc-binding uS14 subfamily. As to quaternary structure, part of the 30S ribosomal subunit. Contacts proteins S3 and S10. The cofactor is Zn(2+).

Its function is as follows. Binds 16S rRNA, required for the assembly of 30S particles and may also be responsible for determining the conformation of the 16S rRNA at the A site. This Mesoplasma florum (strain ATCC 33453 / NBRC 100688 / NCTC 11704 / L1) (Acholeplasma florum) protein is Small ribosomal subunit protein uS14.